The chain runs to 650 residues: Macrolide export ATP-binding/permease protein MacB (650 aa).

The region spanning 2–238 (IDIKGIRKSY…PTTAQEKRQE (237 aa)) is the ABC transporter domain. 38–45 (GPSGSGKS) is an ATP binding site. The next 4 helical transmembrane spans lie at 267-287 (GLSMLGILIGVAAVVGMLALG), 531-551 (IAAISLVVGGIGIMNIMLVSV), 580-600 (IVVSVCGGLLGIALGVGFSLL), and 610-630 (VVSAGSVILSFGFSALIGIVF).

Belongs to the ABC transporter superfamily. Macrolide exporter (TC 3.A.1.122) family. Homodimer.

Its subcellular location is the cell inner membrane. Non-canonical ABC transporter that contains transmembrane domains (TMD), which form a pore in the inner membrane, and an ATP-binding domain (NBD), which is responsible for energy generation. Confers resistance against macrolides. The sequence is that of Macrolide export ATP-binding/permease protein MacB from Bdellovibrio bacteriovorus (strain ATCC 15356 / DSM 50701 / NCIMB 9529 / HD100).